The chain runs to 161 residues: Protein-export protein SecB (161 aa).

This sequence belongs to the SecB family. Homotetramer, a dimer of dimers. One homotetramer interacts with 1 SecA dimer.

It is found in the cytoplasm. Functionally, one of the proteins required for the normal export of preproteins out of the cell cytoplasm. It is a molecular chaperone that binds to a subset of precursor proteins, maintaining them in a translocation-competent state. It also specifically binds to its receptor SecA. This Methylocella silvestris (strain DSM 15510 / CIP 108128 / LMG 27833 / NCIMB 13906 / BL2) protein is Protein-export protein SecB.